A 102-amino-acid chain; its full sequence is MANTQLDHLHYTTEFTRNDLLIICKKFNLMLMDEDIISLLAIFIKMCLWLWKQFLKRGSKCSETSELLEKVKLQLAFTAYKYVDICFPEQMAYSRYIRWYIH.

The helical transmembrane segment at 36 to 55 (IISLLAIFIKMCLWLWKQFL) threads the bilayer.

It localises to the membrane. This is an uncharacterized protein from Homo sapiens (Human).